The following is a 433-amino-acid chain: Xylose isomerase (433 aa).

Mg(2+) contacts are provided by aspartate 305 and aspartate 307.

Belongs to the xylose isomerase family. Homotetramer. The cofactor is Mg(2+).

It localises to the cytoplasm. It catalyses the reaction alpha-D-xylose = alpha-D-xylulofuranose. The polypeptide is Xylose isomerase (Cereibacter sphaeroides (strain KD131 / KCTC 12085) (Rhodobacter sphaeroides)).